Reading from the N-terminus, the 647-residue chain is MGDAGVASQRPHNRRGTRNVRVSANTVTVNGRRNQRRRTGRQVSPPDNFTAAAQDLAQSLDANTVTFPANISSMPEFRNWAKGKIDLDSDSIGWYFKYLDPAGATESARAVGEYSKIPDGLVKFSVDAEIREIYNEECPVVTDVSVPLDGRQWSLSIFSFPMFRTAYVAVANVENKEMSLDVVNDLIEWLNNLADWRYVVDSEQWINFTNDTTYYVRIRVLRPTYDVPDPTEGLVRTVSDYRLTYKAITCEANMPTLVDQGFWIGGQYALTPTSLPQYDVSEAYALHTLTFARPSSAAALAFVWAGLPQGGTAPAGTPAWEQASSGGYLTWRHNGTTFPAGSVSYVLPEGFALERYDPNDGSWTDFASAGDTVTFRQVAVDEVVVTNNPAGGGSAPTFTVRVPPSNAYTNTVFRNTLLETRPSSRRLELPMPPADFGQTVANNPKIEQSLLKETLGCYLVHSKMRNPVFQLTPASSFGAVSFNNPGYERTRDLPDYTGIRDSFDQNMSTAVAHFRSLSHSCSIVTKTYQGWEGVTNVNTPFGQFAHAGLLKNEEILCLADDLATRLTGVYPATDNFAAAVSAFAANMLSSVLKSEATSSIIKSVGETAVGAAQSGLAKLPGLLMSVPGKIAARVRARRARRRAARAN.

The disordered stretch occupies residues 1–48 (MGDAGVASQRPHNRRGTRNVRVSANTVTVNGRRNQRRRTGRQVSPPDN).

The protein belongs to the tetravirus capsid protein family.

The protein resides in the virion. Self-assembles to form an icosahedral capsid with a T=4 symmetry, about 35 nm in diameter, and consisting of 240 copies of the two structural proteins. The protein is Capsid protein (p71) of Helicoverpa armigera (Cotton bollworm).